Reading from the N-terminus, the 98-residue chain is Small ribosomal subunit protein bS20 (98 aa).

The segment covering 1 to 12 (MAPKKTTKKGGP) has biased composition (basic residues). The disordered stretch occupies residues 1–20 (MAPKKTTKKGGPQKRPSAEK).

This sequence belongs to the bacterial ribosomal protein bS20 family.

Functionally, binds directly to 16S ribosomal RNA. This chain is Small ribosomal subunit protein bS20, found in Chlamydia caviae (strain ATCC VR-813 / DSM 19441 / 03DC25 / GPIC) (Chlamydophila caviae).